The primary structure comprises 187 residues: Elongation factor P (187 aa).

Belongs to the elongation factor P family.

Its subcellular location is the cytoplasm. The protein operates within protein biosynthesis; polypeptide chain elongation. In terms of biological role, involved in peptide bond synthesis. Stimulates efficient translation and peptide-bond synthesis on native or reconstituted 70S ribosomes in vitro. Probably functions indirectly by altering the affinity of the ribosome for aminoacyl-tRNA, thus increasing their reactivity as acceptors for peptidyl transferase. The polypeptide is Elongation factor P (Mycoplasmopsis agalactiae (strain NCTC 10123 / CIP 59.7 / PG2) (Mycoplasma agalactiae)).